The following is a 222-amino-acid chain: Thiamine-phosphate synthase (222 aa).

Residues 42 to 46 (QYRDK) and Asn74 contribute to the 4-amino-2-methyl-5-(diphosphooxymethyl)pyrimidine site. Mg(2+) contacts are provided by Asp75 and Asp94. Thr113 provides a ligand contact to 4-amino-2-methyl-5-(diphosphooxymethyl)pyrimidine. 2-[(2R,5Z)-2-carboxy-4-methylthiazol-5(2H)-ylidene]ethyl phosphate is bound at residue 140–142 (SAT). Residue Lys143 coordinates 4-amino-2-methyl-5-(diphosphooxymethyl)pyrimidine. Residue Gly169 coordinates 2-[(2R,5Z)-2-carboxy-4-methylthiazol-5(2H)-ylidene]ethyl phosphate.

Belongs to the thiamine-phosphate synthase family. Requires Mg(2+) as cofactor.

The catalysed reaction is 2-[(2R,5Z)-2-carboxy-4-methylthiazol-5(2H)-ylidene]ethyl phosphate + 4-amino-2-methyl-5-(diphosphooxymethyl)pyrimidine + 2 H(+) = thiamine phosphate + CO2 + diphosphate. It catalyses the reaction 2-(2-carboxy-4-methylthiazol-5-yl)ethyl phosphate + 4-amino-2-methyl-5-(diphosphooxymethyl)pyrimidine + 2 H(+) = thiamine phosphate + CO2 + diphosphate. The enzyme catalyses 4-methyl-5-(2-phosphooxyethyl)-thiazole + 4-amino-2-methyl-5-(diphosphooxymethyl)pyrimidine + H(+) = thiamine phosphate + diphosphate. Its pathway is cofactor biosynthesis; thiamine diphosphate biosynthesis; thiamine phosphate from 4-amino-2-methyl-5-diphosphomethylpyrimidine and 4-methyl-5-(2-phosphoethyl)-thiazole: step 1/1. Its function is as follows. Condenses 4-methyl-5-(beta-hydroxyethyl)thiazole monophosphate (THZ-P) and 2-methyl-4-amino-5-hydroxymethyl pyrimidine pyrophosphate (HMP-PP) to form thiamine monophosphate (TMP). The sequence is that of Thiamine-phosphate synthase from Marinobacter nauticus (strain ATCC 700491 / DSM 11845 / VT8) (Marinobacter aquaeolei).